The sequence spans 171 residues: MSLFKSLVARSGSGIRAAQIARQNGPVISQISIISSQPFSTSPVSYKTNTSTRTKENVHDLETFFRLIGRNTVEHLDLFEGDLAKFLSTSSQQMKFMGIDVSTRRYMLRWKHKFENDLEPLREHKKGKKKNGGERNAKTVLAKKNALKKLEEKEKFAAEELDAENRGERLF.

The N-terminal 23 residues, 1-23 (MSLFKSLVARSGSGIRAAQIARQ), are a transit peptide targeting the mitochondrion. Positions 122–141 (REHKKGKKKNGGERNAKTVL) are disordered.

This sequence belongs to the mitochondrion-specific ribosomal protein mS41 family.

It localises to the mitochondrion. In terms of biological role, involved in telomere length regulation. In Scheffersomyces stipitis (strain ATCC 58785 / CBS 6054 / NBRC 10063 / NRRL Y-11545) (Yeast), this protein is Small ribosomal subunit protein mS41 (FYV4).